The chain runs to 561 residues: MGMPPLLFCWVSFVLPLFVAAGNCTDVYMHHEMISEGQPFPFNCTYPPVTNGAVNLTWHRTPSKSPISINRHVRIHQDQSWILFLPLALEDSGIYQCVIKDAHSCYRIAINLTVFRKHWCDSSNEESSINSSDEYQQWLPIGKSGSLTCHLYFPESCVLDSIKWYKGCEEIKVSKKFCPTGTKLLVNNIDVEDSGSYACSARLTHLGRIFTVRNYIAVNTKEVGSGGRIPNITYPKNNSIEVQLGSTLIVDCNITDTKENTNLRCWRVNNTLVDDYYNDFKRIQEGIETNLSLRNHILYTVNITFLEVKMEDYGHPFTCHAAVSAAYIILKRPAPDFRAYLIGGLMAFLLLAVSILYIYNTFKVDIVLWYRSTFHTAQAPDDEKLYDAYVLYPKYPRESQGHDVDTLVLKILPEVLEKQCGYKLFIFGRDEFPGQAVASVIDENIKLCRRLMVLVAPETSSFSFLKNLTEEQIAVYNALVQDGMKVILIELERVKDYSTMPESIQYIRQKHGAIQWDGDFTEQAQCAKTKFWKKVRYHMPPRRYPASPPVQLLGHTPRIPG.

Residues 1–21 form the signal peptide; sequence MGMPPLLFCWVSFVLPLFVAA. Ig-like C2-type domains follow at residues 22 to 113, 128 to 215, and 225 to 321; these read GNCT…INLT, SINS…VRNY, and SGGR…TCHA. Residues 22–338 are Extracellular-facing; sequence GNCTDVYMHH…ILKRPAPDFR (317 aa). Residues Asn23, Asn43, Asn55, Asn111, and Asn130 are each glycosylated (N-linked (GlcNAc...) asparagine). Cys44 and Cys97 are joined by a disulfide. Cysteines 149 and 199 form a disulfide. 6 N-linked (GlcNAc...) asparagine glycosylation sites follow: Asn231, Asn237, Asn253, Asn269, Asn290, and Asn302. Cys252 and Cys319 are oxidised to a cystine. Residues 339–358 form a helical membrane-spanning segment; the sequence is AYLIGGLMAFLLLAVSILYI. The Cytoplasmic portion of the chain corresponds to 359–561; the sequence is YNTFKVDIVL…LLGHTPRIPG (203 aa). The TIR domain occupies 384-539; it reads KLYDAYVLYP…KFWKKVRYHM (156 aa). Residue Glu470 is part of the active site.

It belongs to the interleukin-1 receptor family. As to quaternary structure, interacts with IL1RAP; the association is enhanced by IL36B indicative for an functional signaling complex and inhibited by IL36RN. Predominant expression in the lung and epididymis, with lower expression in cerebral cortex and testis. Expression in the brain is non-neuronal and associated with the cerebral vasculature. Not detected in any cell line tested.

The protein localises to the membrane. It carries out the reaction NAD(+) + H2O = ADP-D-ribose + nicotinamide + H(+). Receptor for interleukin-36 (IL36A, IL36B and IL36G). After binding to interleukin-36 associates with the coreceptor IL1RAP to form the interleukin-36 receptor complex which mediates interleukin-36-dependent activation of NF-kappa-B, MAPK and other pathways. The IL-36 signaling system is thought to be present in epithelial barriers and to take part in local inflammatory response; it is similar to the IL-1 system. Seems to be involved in skin inflammatory response by induction of the IL-23/IL-17/IL-22 pathway. Receptor for the interleukin IL36G. Binding to the agonist leads to the activation of NF-kappa-B. The protein is Interleukin-1 receptor-like 2 (Il1rl2) of Rattus norvegicus (Rat).